We begin with the raw amino-acid sequence, 278 residues long: Undecaprenyl-diphosphatase (278 aa).

A run of 8 helical transmembrane segments spans residues 3-23 (YILIGVILGIVQGISEWIPIS), 42-62 (VAYSFGLFMEIGTIAAAIIYF), 88-108 (FLVIVTIITGLMGVPLYLFVI), 112-132 (ILGLPMTVLGVVLLIDGIIIY), 152-172 (IIIVGIAQGLAALPGVSRSGI), 190-210 (LSFISLIPAALGAIGVTVLFS), 225-245 (GLLISIVVATFVSIFFINALL), and 253-273 (VVVLVIILGIIAIISGILSGI).

This sequence belongs to the UppP family.

It is found in the cell membrane. The enzyme catalyses di-trans,octa-cis-undecaprenyl diphosphate + H2O = di-trans,octa-cis-undecaprenyl phosphate + phosphate + H(+). In terms of biological role, catalyzes the dephosphorylation of undecaprenyl diphosphate (UPP). This is Undecaprenyl-diphosphatase from Saccharolobus islandicus (strain M.16.4 / Kamchatka #3) (Sulfolobus islandicus).